A 92-amino-acid chain; its full sequence is Envelope glycoprotein J (92 aa).

The first 21 residues, 1–21 (MSLRAVWHLGLLGSLVGAVLA), serve as a signal peptide directing secretion. The Extracellular portion of the chain corresponds to 22 to 49 (ATHRGPAANTTDPLTHAPVSPHPSPLGG). Residue Asn30 is glycosylated (N-linked (GlcNAc...) asparagine; by host). The helical transmembrane segment at 50-70 (FAVPLVVGGLCAVVLGAACLL) threads the bilayer. Residues 71–92 (ELLRRTCRGWGRYHPYMDPVVV) are Cytoplasmic-facing.

The protein belongs to the alphaherpesvirinae glycoprotein J family.

The protein localises to the host Golgi apparatus membrane. It is found in the host endoplasmic reticulum membrane. The protein resides in the host endosome membrane. In terms of biological role, inhibits host cell apoptosis. Induces an increase in reactive oxygen species (ROS) in the host cell. The sequence is that of Envelope glycoprotein J (gJ) from Homo sapiens (Human).